The chain runs to 316 residues: N-acetylmuramic acid 6-phosphate etherase (316 aa).

An SIS domain is found at 68–231 (ITDRLRSGGR…STCAMVRLGK (164 aa)). Catalysis depends on glutamate 96, which acts as the Proton donor. Residue glutamate 127 is part of the active site.

This sequence belongs to the GCKR-like family. MurNAc-6-P etherase subfamily. Homodimer.

It catalyses the reaction N-acetyl-D-muramate 6-phosphate + H2O = N-acetyl-D-glucosamine 6-phosphate + (R)-lactate. It participates in amino-sugar metabolism; N-acetylmuramate degradation. Functionally, specifically catalyzes the cleavage of the D-lactyl ether substituent of MurNAc 6-phosphate, producing GlcNAc 6-phosphate and D-lactate. The sequence is that of N-acetylmuramic acid 6-phosphate etherase from Prochlorococcus marinus (strain MIT 9303).